The following is a 316-amino-acid chain: Nod factor export ATP-binding protein I (316 aa).

Residues 18 to 248 (IDFSDVSKTY…LIGCEVIEIY (231 aa)) form the ABC transporter domain. Residue 50–57 (GPNGAGKS) participates in ATP binding.

It belongs to the ABC transporter superfamily. Lipooligosaccharide exporter (TC 3.A.1.102) family. In terms of assembly, the complex is composed of two ATP-binding proteins (NodI) and two transmembrane proteins (NodJ).

The protein localises to the cell inner membrane. Functionally, part of the ABC transporter complex NodIJ involved in the export of the nodulation factors (Nod factors), the bacterial signal molecules that induce symbiosis and subsequent nodulation induction. Nod factors are LCO (lipo-chitin oligosaccharide), a modified beta-1,4-linked N-acetylglucosamine oligosaccharide. This subunit is responsible for energy coupling to the transport system. In Rhizobium etli (strain ATCC 51251 / DSM 11541 / JCM 21823 / NBRC 15573 / CFN 42), this protein is Nod factor export ATP-binding protein I.